The following is a 482-amino-acid chain: DnaJ protein P58IPK homolog (482 aa).

The N-terminal stretch at 1–42 (MDLFRVWSGMDFLAWRGMAYTLLLLNFVFACQLLLLQPLVSA) is a signal peptide. TPR repeat units follow at residues 50–83 (AAEL…DPAL), 85–117 (EAYF…KSGD), 130–164 (AKSA…SPAC), 166–198 (KAKL…DENN), 199–232 (LEAL…DPEH), 245–278 (LLKK…DPEH), 283–316 (VHLY…DAEL), and 318–350 (EALH…SQDM). The J domain occupies 370–436 (DWYKILGISR…DKRARFDRGE (67 aa)).

In terms of assembly, interacts with the helicase domain of the tobamovirus (TMV) and the tobacco etch virus (TEV) replicases. Expressed in flower buds and flowers.

The protein resides in the endoplasmic reticulum lumen. Its function is as follows. Plays an important positive role in viral symptom development and is required for viral multiplication and pathogenesis. In Arabidopsis thaliana (Mouse-ear cress), this protein is DnaJ protein P58IPK homolog (P58IPK).